The primary structure comprises 1044 residues: Carbamoyl phosphate synthase large chain (1044 aa).

Residues Met-1–Asp-398 form a carboxyphosphate synthetic domain region. Residues Arg-129, Arg-169, Gly-175, Gly-176, Arg-208, Leu-210, Glu-215, Gly-241, Val-242, His-243, Gln-284, and Glu-296 each contribute to the ATP site. Positions His-133 to Val-325 constitute an ATP-grasp 1 domain. Positions 284, 296, and 298 each coordinate Mg(2+). Mn(2+)-binding residues include Gln-284, Glu-296, and Asn-298. The oligomerization domain stretch occupies residues Ile-399–Leu-539. Positions Pro-540–Ile-916 are carbamoyl phosphate synthetic domain. The region spanning Ser-665–Met-854 is the ATP-grasp 2 domain. ATP-binding residues include Arg-701, Lys-738, Leu-740, Glu-745, Gly-770, Val-771, His-772, Ser-773, Gln-813, and Glu-825. Gln-813, Glu-825, and Asn-827 together coordinate Mg(2+). The Mn(2+) site is built by Gln-813, Glu-825, and Asn-827. In terms of domain architecture, MGS-like spans Ser-911–His-1044. The segment at Ile-916–His-1044 is allosteric domain.

The protein belongs to the CarB family. In terms of assembly, composed of two chains; the small (or glutamine) chain promotes the hydrolysis of glutamine to ammonia, which is used by the large (or ammonia) chain to synthesize carbamoyl phosphate. Tetramer of heterodimers (alpha,beta)4. Requires Mg(2+) as cofactor. It depends on Mn(2+) as a cofactor.

The catalysed reaction is hydrogencarbonate + L-glutamine + 2 ATP + H2O = carbamoyl phosphate + L-glutamate + 2 ADP + phosphate + 2 H(+). It carries out the reaction hydrogencarbonate + NH4(+) + 2 ATP = carbamoyl phosphate + 2 ADP + phosphate + 2 H(+). Its pathway is amino-acid biosynthesis; L-arginine biosynthesis; carbamoyl phosphate from bicarbonate: step 1/1. The protein operates within pyrimidine metabolism; UMP biosynthesis via de novo pathway; (S)-dihydroorotate from bicarbonate: step 1/3. Its function is as follows. Large subunit of the glutamine-dependent carbamoyl phosphate synthetase (CPSase). CPSase catalyzes the formation of carbamoyl phosphate from the ammonia moiety of glutamine, carbonate, and phosphate donated by ATP, constituting the first step of 2 biosynthetic pathways, one leading to arginine and/or urea and the other to pyrimidine nucleotides. The large subunit (synthetase) binds the substrates ammonia (free or transferred from glutamine from the small subunit), hydrogencarbonate and ATP and carries out an ATP-coupled ligase reaction, activating hydrogencarbonate by forming carboxy phosphate which reacts with ammonia to form carbamoyl phosphate. The sequence is that of Carbamoyl phosphate synthase large chain from Thermoplasma volcanium (strain ATCC 51530 / DSM 4299 / JCM 9571 / NBRC 15438 / GSS1).